Consider the following 577-residue polypeptide: Optineurin (577 aa).

Disordered stretches follow at residues 1–32 (MSHQ…HPNL) and 101–143 (SHEN…KDQL). Residues 38–170 (EELLQQMKEL…VSELQLKLNS (133 aa)) adopt a coiled-coil conformation. The interval 58–209 (MKLNNQAMKG…GPTRTVSTGT (152 aa)) is interaction with Rab8. The LIR signature appears at 176 to 181 (DSFVEI). Residue S177 is modified to Phosphoserine; by TBK1. Over residues 186-197 (GEAEGSVKEIKH) the composition is skewed to basic and acidic residues. Disordered regions lie at residues 186-209 (GEAE…STGT) and 261-297 (VSDF…TVGS). The residue at position 198 (S198) is a Phosphoserine. Positions 239-508 (CLREGNQKVE…LLKENDAFED (270 aa)) form a coiled coil. Basic and acidic residues-rich tracts occupy residues 261–274 (VSDF…RSEI) and 281–292 (STEKENDEEKGP). A Phosphoserine modification is found at S342. The interval 411–577 (TRKESEKVDR…LQIHVMDCII (167 aa)) is interaction with HD. Positions 412-520 (RKESEKVDRA…RQSLMEMQSR (109 aa)) are interaction with MYO6. The UBAN motif lies at 474-479 (DFHAER). Position 526 is a phosphoserine (S526). A CCHC NOA-type zinc finger spans residues 547 to 577 (QRNIPIHSCPKCGEVLPDIDTLQIHVMDCII). Zn(2+) is bound by residues C555, C558, H571, and C575.

Self-associates. Interacts with HD. Interacts with GTF3A. Interacts with MYO6. Interacts (via UBAN) with ubiquitinated TFRC. Interacts with GTP-bound Rab8 (RAB8A and/or RAB8B). Interacts with TBC1D17. Interacts with TBK1. Interacts with TRAF3. Binds to linear ubiquitin chains. Interacts with LC3 family members MAP1LC3A, MAP1LC3B, GABARAP, GABARAPL1 and GABARAPL2; OPTN phosphorylation increases the association (at least with MAP1LC3B). Interacts with RAB12; the interaction may be indirect. Interacts with TBK1; this interaction leads to the Golgi localization of TBK1 and its subsequent activation. Interacts with palmitoyltransferase ZDHHC17/HIP14; the interaction does not lead to palmitoylation of OPTN. Interacts with CYLD. Interacts with TOM1; the interaction is indirect and is mediated by MYO6, which acts as a bridge between TOM1 and OPTN. Interacts with USP12; the interaction is independent of USP12 deubiquitinase activity and may be involved in regulation of autophagic flux. In terms of assembly, (Microbial infection) Interacts with E3 14.7 kDa protein of group C human adenovirus. Interacts with Bluetongue virus protein NS3. Post-translationally, phosphorylated by TBK1, leading to restrict bacterial proliferation in case of infection. Phosphorylation is induced by phorbol esters and decreases its half-time. Present in aqueous humor of the eye (at protein level). Expressed in the trabecular meshwork (at protein level). Expressed in nonpigmented ciliary epithelium (at protein level). Expressed at high levels in skeletal muscle, also detected in heart, brain, pancreas, kidney, placenta and liver. Expressed in dermal fibroblasts (at protein level).

It is found in the cytoplasm. The protein localises to the perinuclear region. It localises to the golgi apparatus. Its subcellular location is the trans-Golgi network. The protein resides in the cytoplasmic vesicle. It is found in the autophagosome. The protein localises to the recycling endosome. Plays an important role in the maintenance of the Golgi complex, in membrane trafficking, in exocytosis, through its interaction with myosin VI and Rab8. Links myosin VI to the Golgi complex and plays an important role in Golgi ribbon formation. Plays a role in the activation of innate immune response during viral infection. Mechanistically, recruits TBK1 at the Golgi apparatus, promoting its trans-phosphorylation after RLR or TLR3 stimulation. In turn, activated TBK1 phosphorylates its downstream partner IRF3 to produce IFN-beta/IFNB1. Plays a neuroprotective role in the eye and optic nerve. May act by regulating membrane trafficking and cellular morphogenesis via a complex that contains Rab8 and huntingtin (HD). Mediates the interaction of Rab8 with the probable GTPase-activating protein TBC1D17 during Rab8-mediated endocytic trafficking, such as that of transferrin receptor (TFRC/TfR); regulates Rab8 recruitment to tubules emanating from the endocytic recycling compartment. Autophagy receptor that interacts directly with both the cargo to become degraded and an autophagy modifier of the MAP1 LC3 family; targets ubiquitin-coated bacteria (xenophagy), such as cytoplasmic Salmonella enterica, and appears to function in the same pathway as SQSTM1 and CALCOCO2/NDP52. Functionally, (Microbial infection) May constitute a cellular target for various viruses, such as adenovirus E3 14.7 or Bluetongue virus, to inhibit innate immune response. During RNA virus infection, such as that of Sendai virus, negatively regulates the induction of IFNB1. This chain is Optineurin (OPTN), found in Homo sapiens (Human).